A 265-amino-acid chain; its full sequence is MAGNFWQSSHHQQWILDKQDLIRERQHDLKNLTEEEYQKIFMFFANVIQVLGEQLKLRQQVIATATVYFKRFYARNSLKCIDPLLLAPTCILLASKVEEFGVISNSRLITTCQTVIKNKFSYAYQQEFPYRTNHILECEFYLLENLDCCLIVYQPYRPLLQLIQDIGQEDQLLTLTWRLINDSLRTDVSLLYPPYQIAIGCLQIACVILQKELKAWFAELNVDMEKVQEIARAILNVFELWKSYDEKEIQGLLEKMPKPKPAPQR.

The region spanning 48 to 151 (IQVLGEQLKL…LLENLDCCLI (104 aa)) is the Cyclin N-terminal domain.

The protein belongs to the cyclin family. Cyclin C subfamily. Component of the Cdk8 module of the Mediator complex.

It is found in the nucleus. In terms of biological role, component of the Mediator complex, a coactivator involved in regulated gene transcription of nearly all RNA polymerase II-dependent genes. Mediator functions as a bridge to convey information from gene-specific regulatory proteins to the basal RNA polymerase II transcription machinery. Mediator is recruited to promoters by direct interactions with regulatory proteins and serves as a scaffold for the assembly of a functional preinitiation complex with RNA polymerase II and the general transcription factors. Binds to and activates cyclin-dependent kinase Cdk8 that phosphorylates the CTD (C-terminal domain) of the large subunit of RNA polymerase II (RNAp II), which may inhibit the formation of a transcription initiation complex. This is Cyclin-C (CycC) from Aedes aegypti (Yellowfever mosquito).